We begin with the raw amino-acid sequence, 230 residues long: MDSDFYRAYLLHRRPYSDSQVMLDMLVEGVGQLRMLARISGRQATKHKAQLQPFQALLVHYNGKYDLKYINKFELHGTPLFLKGDELYCGFYLNELTNRIVPINEPIDQVFQLYNTHLKNLNSGANLQAVLRSYEFQLLELLGYGVDFSFDASGEPIDEKRTYSYFAEVGFLVQDDPRSGFSGLQLNAIANHDFSQADVLYMAKQLSRYLLKPLLGNKPLKSRELFAASQ.

It belongs to the RecO family.

Its function is as follows. Involved in DNA repair and RecF pathway recombination. The protein is DNA repair protein RecO of Pseudoalteromonas translucida (strain TAC 125).